A 163-amino-acid chain; its full sequence is Cyclic pyranopterin monophosphate synthase (163 aa).

Residues 79-81 and 117-118 contribute to the substrate site; these read LCH and ME. The active site involves Asp-132.

This sequence belongs to the MoaC family. In terms of assembly, homohexamer; trimer of dimers.

The catalysed reaction is (8S)-3',8-cyclo-7,8-dihydroguanosine 5'-triphosphate = cyclic pyranopterin phosphate + diphosphate. It functions in the pathway cofactor biosynthesis; molybdopterin biosynthesis. Functionally, catalyzes the conversion of (8S)-3',8-cyclo-7,8-dihydroguanosine 5'-triphosphate to cyclic pyranopterin monophosphate (cPMP). The sequence is that of Cyclic pyranopterin monophosphate synthase from Chloroflexus aurantiacus (strain ATCC 29366 / DSM 635 / J-10-fl).